We begin with the raw amino-acid sequence, 230 residues long: Ubiquitin carboxyl-terminal hydrolase isozyme L3 (230 aa).

In terms of domain architecture, UCH catalytic spans 5 to 229 (RWLPLEANPE…LRFNAIALSA (225 aa)). Residues 8 to 13 (PLEANP) form an interaction with ubiquitin region. The Nucleophile role is filled by C95. Phosphoserine is present on S130. The interval 152–159 (AHEGQTEA) is interaction with ubiquitin. Crossover loop which restricts access of large ubiquitin adducts to the active site. The Proton donor role is filled by H169. Positions 219-224 (ELRFNA) are interaction with ubiquitin.

The protein belongs to the peptidase C12 family. Preferentially binds diubiquitin; the interaction does not hydrolyze diubiquitin but, in vitro, inhibits the hydrolyzing activity on other substrates. As to expression, ubiquitously expressed, with highest levels in brain, liver, heart, thymus, kidney and testis. Highly expressed in the cauda epididymidis, in meiotic pachytene spermatocytes and post-meiotic spematids. In the retina, enriched in the photoreceptor inner segment.

It localises to the cytoplasm. It catalyses the reaction Thiol-dependent hydrolysis of ester, thioester, amide, peptide and isopeptide bonds formed by the C-terminal Gly of ubiquitin (a 76-residue protein attached to proteins as an intracellular targeting signal).. Its activity is regulated as follows. Inhibited by monoubiquitin and diubiquitin. Functionally, deubiquitinating enzyme (DUB) that controls levels of cellular ubiquitin through processing of ubiquitin precursors and ubiquitinated proteins. Thiol protease that recognizes and hydrolyzes a peptide bond at the C-terminal glycine of either ubiquitin or NEDD8. Has a 10-fold preference for Arg and Lys at position P3'', and exhibits a preference towards 'Lys-48'-linked ubiquitin chains. Deubiquitinates ENAC in apical compartments, thereby regulating apical membrane recycling. Indirectly increases the phosphorylation of IGFIR, AKT and FOXO1 and promotes insulin-signaling and insulin-induced adipogenesis. Required for stress-response retinal, skeletal muscle and germ cell maintenance. May be involved in working memory. Can hydrolyze UBB(+1), a mutated form of ubiquitin which is not effectively degraded by the proteasome. The protein is Ubiquitin carboxyl-terminal hydrolase isozyme L3 (Uchl3) of Mus musculus (Mouse).